Reading from the N-terminus, the 107-residue chain is Large ribosomal subunit protein uL24 (107 aa).

Belongs to the universal ribosomal protein uL24 family. In terms of assembly, part of the 50S ribosomal subunit.

Its function is as follows. One of two assembly initiator proteins, it binds directly to the 5'-end of the 23S rRNA, where it nucleates assembly of the 50S subunit. In terms of biological role, one of the proteins that surrounds the polypeptide exit tunnel on the outside of the subunit. This chain is Large ribosomal subunit protein uL24, found in Nitrosomonas eutropha (strain DSM 101675 / C91 / Nm57).